The sequence spans 279 residues: Zinc finger CCCH domain-containing protein 1 (279 aa).

Residues 20-45 are disordered; that stretch reads DVIVLSPGPPARRRPPPVKAVEPESG. 2 C3H1-type zinc fingers span residues 56–84 and 139–167; these read FYKT…HGDE and RAIT…HVSA.

This Oryza sativa subsp. japonica (Rice) protein is Zinc finger CCCH domain-containing protein 1.